Here is a 531-residue protein sequence, read N- to C-terminus: Histone-arginine methyltransferase CARMER (531 aa).

An SAM-dependent MTase PRMT-type domain is found at 141–450; it reads ASQYFQFYGY…QSYDVTIDLH (310 aa). S-adenosyl-L-methionine is bound by residues glutamine 154, arginine 163, glycine 187, glutamate 209, glutamate 238, and threonine 266. The residue at position 501 (arginine 501) is an Asymmetric dimethylarginine; by autocatalysis.

The protein belongs to the class I-like SAM-binding methyltransferase superfamily. Protein arginine N-methyltransferase family. As to quaternary structure, homodimer. In terms of processing, the dimethylated protein is the major form.

It is found in the cytoplasm. It localises to the nucleus. The catalysed reaction is L-arginyl-[protein] + 2 S-adenosyl-L-methionine = N(omega),N(omega)-dimethyl-L-arginyl-[protein] + 2 S-adenosyl-L-homocysteine + 2 H(+). In terms of biological role, methylates (mono- and asymmetric dimethylation) the guanidino nitrogens of arginyl residues in proteins. May methylate histone H3 at 'Arg-17' and activate transcription via chromatin remodeling. In Drosophila ananassae (Fruit fly), this protein is Histone-arginine methyltransferase CARMER (Art4).